An 815-amino-acid polypeptide reads, in one-letter code: Probable disease resistance protein At5g66910 (815 aa).

An RPW8 domain is found at 1 to 150 (MVVVDWLGLG…NINKKLDRLS (150 aa)). 2 consecutive NB-ARC domains span residues 156–283 (PLVS…DVWQ) and 341–440 (SPDE…DIWM). Residue 196 to 203 (GPPGCGKT) coordinates ATP. LRR repeat units follow at residues 656-678 (NLQE…IPEV), 680-702 (SLKT…IGNL), 704-726 (RLEV…TERL), and 728-750 (NLRS…IGKL).

This sequence belongs to the disease resistance NB-LRR family.

Probable disease resistance protein. The protein is Probable disease resistance protein At5g66910 of Arabidopsis thaliana (Mouse-ear cress).